Here is a 92-residue protein sequence, read N- to C-terminus: Acylphosphatase (92 aa).

Residues 5-92 enclose the Acylphosphatase-like domain; the sequence is YIVAYVYGVV…TPFETFSIRY (88 aa). Catalysis depends on residues R20 and N38.

Belongs to the acylphosphatase family.

The catalysed reaction is an acyl phosphate + H2O = a carboxylate + phosphate + H(+). The sequence is that of Acylphosphatase (acyP) from Yersinia pseudotuberculosis serotype O:1b (strain IP 31758).